The sequence spans 613 residues: Laccase 1 (613 aa).

A signal peptide spans 1 to 20 (MSRFARLLLIVALFFTGAWA). Plastocyanin-like domains are found at residues 29–142 (ITWK…IRPK) and 171–359 (YLVV…MRIP). An N-linked (GlcNAc...) asparagine glycan is attached at asparagine 74. Positions 78, 80, 122, and 124 each coordinate Cu cation. N-linked (GlcNAc...) asparagine glycosylation is found at asparagine 256, asparagine 279, asparagine 444, asparagine 468, and asparagine 484. Positions 468 to 598 (NATRDTENDG…GGMGIAILDG (131 aa)) constitute a Plastocyanin-like 3 domain. Cu cation contacts are provided by histidine 506, histidine 509, and histidine 511. N-linked (GlcNAc...) asparagine glycosylation occurs at asparagine 526. 4 residues coordinate Cu cation: histidine 580, cysteine 581, histidine 582, and histidine 586.

Belongs to the multicopper oxidase family. Cu cation is required as a cofactor.

It localises to the cell surface. It functions in the pathway pigment biosynthesis. Laccase; part of the Pks1 gene cluster that mediates the biosynthesis of an anthraquinone derivative pigment that contributes to conidial pigmentation that provides protection from UV radiation, heat and cold stress. The polyketide synthase Pks1 produces 1-acetyl-2,4,6,8-tetrahydroxy-9,10-anthraquinone though condensation of acetyl-CoA with malonyl-CoA. The dehydratase EthD and the laccase Mlac1 further convert the anthraquinone derivative into the final conidial pigment. The protein is Laccase 1 of Metarhizium guizhouense (strain ARSEF 977).